The sequence spans 64 residues: Large ribosomal subunit protein bL33c (64 aa).

Belongs to the bacterial ribosomal protein bL33 family.

The protein resides in the plastid. The protein localises to the cyanelle. The protein is Large ribosomal subunit protein bL33c (rpl33) of Cyanophora paradoxa.